A 246-amino-acid polypeptide reads, in one-letter code: Phycocyanobilin:ferredoxin oxidoreductase (246 aa).

It belongs to the HY2 family.

The catalysed reaction is (2R,3Z)-phycocyanobilin + 4 oxidized [2Fe-2S]-[ferredoxin] = biliverdin IXalpha + 4 reduced [2Fe-2S]-[ferredoxin] + 4 H(+). Its function is as follows. Catalyzes the four-electron reduction of biliverdin IX-alpha (2-electron reduction at both the A and D rings); the reaction proceeds via an isolatable 2-electron intermediate, 181,182-dihydrobiliverdin. The chain is Phycocyanobilin:ferredoxin oxidoreductase from Crocosphaera subtropica (strain ATCC 51142 / BH68) (Cyanothece sp. (strain ATCC 51142)).